The primary structure comprises 649 residues: DNA mismatch repair protein MutL (649 aa).

It belongs to the DNA mismatch repair MutL/HexB family.

Its function is as follows. This protein is involved in the repair of mismatches in DNA. It is required for dam-dependent methyl-directed DNA mismatch repair. May act as a 'molecular matchmaker', a protein that promotes the formation of a stable complex between two or more DNA-binding proteins in an ATP-dependent manner without itself being part of a final effector complex. The chain is DNA mismatch repair protein MutL from Streptococcus pneumoniae (strain JJA).